The sequence spans 511 residues: GMP synthase [glutamine-hydrolyzing] (511 aa).

Positions Lys3–Asp193 constitute a Glutamine amidotransferase type-1 domain. The active-site Nucleophile is the Cys80. Catalysis depends on residues His167 and Glu169. The GMPS ATP-PPase domain occupies Trp194–Arg384. Ser221–Leu227 is a binding site for ATP.

Homodimer.

It catalyses the reaction XMP + L-glutamine + ATP + H2O = GMP + L-glutamate + AMP + diphosphate + 2 H(+). It functions in the pathway purine metabolism; GMP biosynthesis; GMP from XMP (L-Gln route): step 1/1. Its function is as follows. Catalyzes the synthesis of GMP from XMP. This Malacoplasma penetrans (strain HF-2) (Mycoplasma penetrans) protein is GMP synthase [glutamine-hydrolyzing].